The primary structure comprises 178 residues: Inorganic pyrophosphatase (178 aa).

Substrate contacts are provided by Lys29, Arg43, and Tyr55. Positions 65, 70, and 102 each coordinate Mg(2+). Position 141 (Tyr141) interacts with substrate.

The protein belongs to the PPase family. As to quaternary structure, homohexamer. Requires Mg(2+) as cofactor.

Its subcellular location is the cytoplasm. The catalysed reaction is diphosphate + H2O = 2 phosphate + H(+). Catalyzes the hydrolysis of inorganic pyrophosphate (PPi) forming two phosphate ions. The polypeptide is Inorganic pyrophosphatase (Rickettsia typhi (strain ATCC VR-144 / Wilmington)).